The following is a 188-amino-acid chain: Ribosome-recycling factor (188 aa).

Belongs to the RRF family.

The protein localises to the cytoplasm. In terms of biological role, responsible for the release of ribosomes from messenger RNA at the termination of protein biosynthesis. May increase the efficiency of translation by recycling ribosomes from one round of translation to another. In Cereibacter sphaeroides (strain ATCC 17025 / ATH 2.4.3) (Rhodobacter sphaeroides), this protein is Ribosome-recycling factor.